A 205-amino-acid polypeptide reads, in one-letter code: Glycerol-3-phosphate acyltransferase (205 aa).

Over 1–3 (MSA) the chain is Periplasmic. A helical membrane pass occupies residues 4 to 24 (IAPGMILFAYLCGSISSAILV). Over 25-52 (CRIAGLPDPRESGSGNPGATNVLRIGGK) the chain is Cytoplasmic. A helical transmembrane segment spans residues 53–73 (GAAVAVLIFDILKGMLPVWGA). Over 74–80 (YALGVTP) the chain is Periplasmic. Residues 81–101 (FWLGLIAIAACLGHIWPVFFG) form a helical membrane-spanning segment. The Cytoplasmic segment spans residues 102-111 (FKGGKGVATA). Residues 112-132 (FGAIAPIGWDLTGVMAGTWLL) form a helical membrane-spanning segment. Over 133–137 (TVLLS) the chain is Periplasmic. The helical transmembrane segment at 138–158 (GYSSLGAIVSALIAPFYVWWF) threads the bilayer. Over 159–205 (KPQFTFPVSMLSCLILLRHHDNIQRLWRRQETKIWTKLKKKRQKDSE) the chain is Cytoplasmic.

This sequence belongs to the PlsY family. Probably interacts with PlsX.

The protein localises to the cell inner membrane. It carries out the reaction sn-glycerol 3-phosphate + an acyl-CoA = a 1-acyl-sn-glycero-3-phosphate + CoA. The catalysed reaction is a fatty acyl-[ACP] + sn-glycerol 3-phosphate = a 1-acyl-sn-glycero-3-phosphate + holo-[ACP]. It participates in lipid metabolism; phospholipid metabolism. Catalyzes the transfer of an acyl group from acyl-ACP to glycerol-3-phosphate (G3P) to form lysophosphatidic acid (LPA). This enzyme can also utilize acyl-CoA as fatty acyl donor, but not acyl-PO(4). The sequence is that of Glycerol-3-phosphate acyltransferase from Salmonella schwarzengrund (strain CVM19633).